The primary structure comprises 199 residues: Ubiquitin-conjugating enzyme E2-22 kDa (199 aa).

Residues 4–154 (MAVSRIKREF…AKHWTNAYAG (151 aa)) form the UBC core domain. C92 serves as the catalytic Glycyl thioester intermediate. The 39-residue stretch at 161 to 199 (DCDSKIQRLRDMGIDEHEARAVLSKENWNLEKATEGLFS) folds into the UBA domain.

The protein belongs to the ubiquitin-conjugating enzyme family. Interacts with Rpn10. As to expression, during gastrulation, expression is highest in the invaginating posterior midgut primordium (PMG), high expression is also observed in the cephalic furrow and ventral ectodermal neurogenic region. In stage 10-11 embryos, expression is high in the pole cells present in the pocket formed by the PMG. During germ band retraction, expression appears to reinitiate in many tissues, especially the gut and nervous system. After dorsal closure, expression is detectable at low levels throughout the embryo.

It catalyses the reaction S-ubiquitinyl-[E1 ubiquitin-activating enzyme]-L-cysteine + [E2 ubiquitin-conjugating enzyme]-L-cysteine = [E1 ubiquitin-activating enzyme]-L-cysteine + S-ubiquitinyl-[E2 ubiquitin-conjugating enzyme]-L-cysteine.. The protein operates within protein modification; protein ubiquitination. Its function is as follows. Catalyzes the covalent attachment of ubiquitin to other proteins. This Drosophila melanogaster (Fruit fly) protein is Ubiquitin-conjugating enzyme E2-22 kDa.